The primary structure comprises 1070 residues: MLGDGNGGMSTIPGFNQIQFEGFCRFIDQGLAEELYKFPKIEDRDQEIEFQLFVETYQLVEPSIKERDAVYESLTYSSELYVSGGLIWKNSRDMQEQTIFIGNIPLMNSLGTSIVNGIYRIVINQILQSPGIYYRSELNHNGISVYTGTIISDWGGRVELEIDKKARIWARVSRKQKISILVLSSAMGLNLREILENVCYPEIFLSFLSDKEKKKIGSRENAILEFYQQFTCVGGGPVFSESLCKELQKKFFQQRCELGRIGRLNMNQRLNLDIPHNNTFLLPRDILAAADHLIGMKFGMGTLDDMNHLKNKRIRSVADLLQDQFGLALIRLENVVRGTICGAIRHKLIPTPQNLVTSTPLTTTYESFFGLHPLSQVLDRTNPLTQIVHGRKSSYLGPGGLTGRTASFRIRDIHPSHYGRICPIDTSEGINVGLIGSLTIHAKIGHLGSLESPFYEISARSKKVRMLYLSPNRDEYYMIAAGNCLALNRGAREEQVVPARYRQEFLTIAWEQVRLRSFFPFQYFSIGASLIPFIEHNDANRALMSSNMQRQAVPLARSEKCIVGTGLERQVALDSGVPAIAEHEGKIIYTDIDKIILSGNGYTVSIPLVMYQRSNKNTCMHQKTQVQRGKCIKRGQVLADGAATVGGELALGKNILVAYMPWEGYNFEDAVLISERLVYEDVYTSFHIRKYEIQTHVTSQGPERITNEIPHLEAHLLRNLDKNGIVMLGSWVETGDILIGKLTPQLAKESSYAPEDRLLRAILGIQVSTSKETCLKLPTGGRGRVIDVRWIQKKGGSSYNPETIRVYILQKREIKVGDKVAGRHGNKGIISKILPRQDMPYLQDGGPVDMVFNPLGVPSRMNVGQIFECSLGLAGSLLARHYRVAPFDERYEQEASRKLVFSELYEAGKQTANPWVFEPECPGKSRIFDGRTGDPFEQPVIIGKPYILKLIHQVADKIHGRSSGHYALVTQQPLRGRAKQGGQRVGEMEVWALEGFGVSHILQEMLTYKSDHIRARQEVLGTTISGRTIPKPEDAPESFRLLVRELRSLALELKHFLISEKNFQINRKEV.

Belongs to the RNA polymerase beta chain family. In terms of assembly, in plastids the minimal PEP RNA polymerase catalytic core is composed of four subunits: alpha, beta, beta', and beta''. When a (nuclear-encoded) sigma factor is associated with the core the holoenzyme is formed, which can initiate transcription.

The protein resides in the plastid. It is found in the chloroplast. It catalyses the reaction RNA(n) + a ribonucleoside 5'-triphosphate = RNA(n+1) + diphosphate. DNA-dependent RNA polymerase catalyzes the transcription of DNA into RNA using the four ribonucleoside triphosphates as substrates. The chain is DNA-directed RNA polymerase subunit beta from Populus alba (White poplar).